Reading from the N-terminus, the 151-residue chain is Ribonuclease H (151 aa).

An RNase H type-1 domain is found at 1–146 (MSDLFAYTDG…ADELARAGMA (146 aa)). D9, E52, D74, and D138 together coordinate Mg(2+).

It belongs to the RNase H family. As to quaternary structure, monomer. Mg(2+) serves as cofactor.

Its subcellular location is the cytoplasm. It catalyses the reaction Endonucleolytic cleavage to 5'-phosphomonoester.. Functionally, endonuclease that specifically degrades the RNA of RNA-DNA hybrids. This is Ribonuclease H from Cereibacter sphaeroides (strain ATCC 17025 / ATH 2.4.3) (Rhodobacter sphaeroides).